Reading from the N-terminus, the 452-residue chain is Maltoporin (452 aa).

The signal sequence occupies residues 1–25 (MMITLRKLPLAVAVAAGVMSAQAMA).

This sequence belongs to the porin LamB (TC 1.B.3) family. Homotrimer formed of three 18-stranded antiparallel beta-barrels, containing three independent channels.

The protein localises to the cell outer membrane. It carries out the reaction beta-maltose(in) = beta-maltose(out). Functionally, involved in the transport of maltose and maltodextrins. This Salmonella newport (strain SL254) protein is Maltoporin.